We begin with the raw amino-acid sequence, 374 residues long: Glutamate 5-kinase (374 aa).

Lys-16 contacts ATP. Substrate is bound by residues Ser-56, Asp-143, and Asn-155. An ATP-binding site is contributed by Thr-175–Asp-176. Residues Arg-282–Val-360 form the PUA domain.

It belongs to the glutamate 5-kinase family.

The protein resides in the cytoplasm. It catalyses the reaction L-glutamate + ATP = L-glutamyl 5-phosphate + ADP. It participates in amino-acid biosynthesis; L-proline biosynthesis; L-glutamate 5-semialdehyde from L-glutamate: step 1/2. Functionally, catalyzes the transfer of a phosphate group to glutamate to form L-glutamate 5-phosphate. The chain is Glutamate 5-kinase from Ralstonia pickettii (strain 12J).